Consider the following 156-residue polypeptide: Regulatory protein RecX (156 aa).

This sequence belongs to the RecX family.

The protein resides in the cytoplasm. Its function is as follows. Modulates RecA activity. This Pseudomonas putida (strain ATCC 47054 / DSM 6125 / CFBP 8728 / NCIMB 11950 / KT2440) protein is Regulatory protein RecX.